We begin with the raw amino-acid sequence, 295 residues long: uncharacterized protein (295 aa).

It belongs to the NAD(P)-dependent epimerase/dehydratase family.

This is an uncharacterized protein from Schizosaccharomyces pombe (strain 972 / ATCC 24843) (Fission yeast).